Here is a 464-residue protein sequence, read N- to C-terminus: tRNA modification GTPase MnmE (464 aa).

(6S)-5-formyl-5,6,7,8-tetrahydrofolate-binding residues include R29, E91, and R131. The 162-residue stretch at 226–387 (GLKVALAGKP…LINYLLKKCG (162 aa)) folds into the TrmE-type G domain. A K(+)-binding site is contributed by N236. Residues 236 to 241 (NVGKSS), 255 to 261 (TDLPGTT), and 280 to 283 (DTAG) each bind GTP. Residue S240 participates in Mg(2+) binding. T255, L257, and T260 together coordinate K(+). A Mg(2+)-binding site is contributed by T261. K464 provides a ligand contact to (6S)-5-formyl-5,6,7,8-tetrahydrofolate.

This sequence belongs to the TRAFAC class TrmE-Era-EngA-EngB-Septin-like GTPase superfamily. TrmE GTPase family. Homodimer. Heterotetramer of two MnmE and two MnmG subunits. The cofactor is K(+).

The protein localises to the cytoplasm. Functionally, exhibits a very high intrinsic GTPase hydrolysis rate. Involved in the addition of a carboxymethylaminomethyl (cmnm) group at the wobble position (U34) of certain tRNAs, forming tRNA-cmnm(5)s(2)U34. The chain is tRNA modification GTPase MnmE from Prochlorococcus marinus (strain NATL1A).